A 676-amino-acid polypeptide reads, in one-letter code: MEKNLPDIFFFPNCVNVFSYKYSQDEFSNMSNMERDSFSLAVFPVIKHRWHNAHVVKHKGIYKVSTEAHGKKVSPPSLGKPSHINLTAKQYIYSEHTISFECYSFLKCITNAEINSFDEYILRGLLEAGNSLQIFSNSVGKRTDTIGVLGNKYPFSKIPLASLTPKAQREIFSAWISHRPVVLTGGTGVGKTSQVPKLLLWFNYLFGGFSTLDKITDFHERPVILSLPRIALVRLHSNTILKSLGFKVLDGSPISLRYGSIPEELINKQPKKYGIVFSTHKLSLTKLFSYGTLIIDEVHEHDQIGDIIIAVARKHHTKIDSMFLMTATLEDDRERLKVFLPNPAFIHIPGDTLFKISEVFIHNKINPSSRMAYIEEEKRNLVTAIQMYTPPDGSSGIVFVASVAQCHEYKSYLEKRLPYDMYIIHGKVLEIDKILEKVYSSPNVSIIISTPYLESSVTIHNVTHIYDMGRVFVPAPFGGSQQFISKSMRDQRKGRVGRVNPGTYVYFYDLSYMKSIQRINSEFLHNYILYANKFNLTLPEDLFIIPTNLDILWRTKEYIDSFDISTETWNKLLSNYYMKMIEYAKLYVLSPILAEELDNFERTGELTSIVQEAILSLNLRIKILNFKHKDNDTYIHFCKILFGVYNGTNATIYYHRPLTGYMNMISDTIFVPVDNN.

The 176-residue stretch at 172-347 (FSAWISHRPV…VFLPNPAFIH (176 aa)) folds into the Helicase ATP-binding domain. 185 to 192 (GGTGVGKT) provides a ligand contact to ATP. The DEXH box motif lies at 296-299 (DEVH). The Helicase C-terminal domain maps to 366 to 542 (NPSSRMAYIE…KFNLTLPEDL (177 aa)).

The protein belongs to the DEAD box helicase family. DEAH subfamily. Monomer.

The protein localises to the virion. The catalysed reaction is ATP + H2O = ADP + phosphate + H(+). Functionally, NTP-dependent helicase that catalyzes unidirectional unwinding of 3'tailed duplex RNAs and plays an important role during transcription of early mRNAs, presumably by preventing R-loop formation behind the elongating RNA polymerase. Might also play a role in the export of newly synthesized mRNA chains out of the core into the cytoplasm. Required for replication and propagation of viral particles. The protein is RNA helicase NPH-II (OPG084) of Homo sapiens (Human).